Consider the following 421-residue polypeptide: 3-isopropylmalate dehydratase large subunit (421 aa).

[4Fe-4S] cluster contacts are provided by Cys-300, Cys-360, and Cys-363.

The protein belongs to the aconitase/IPM isomerase family. LeuC type 2 subfamily. Heterodimer of LeuC and LeuD. It depends on [4Fe-4S] cluster as a cofactor.

It catalyses the reaction (2R,3S)-3-isopropylmalate = (2S)-2-isopropylmalate. It participates in amino-acid biosynthesis; L-leucine biosynthesis; L-leucine from 3-methyl-2-oxobutanoate: step 2/4. Functionally, catalyzes the isomerization between 2-isopropylmalate and 3-isopropylmalate, via the formation of 2-isopropylmaleate. In Thermodesulfovibrio yellowstonii (strain ATCC 51303 / DSM 11347 / YP87), this protein is 3-isopropylmalate dehydratase large subunit.